A 583-amino-acid polypeptide reads, in one-letter code: MASKAAPSCRLVFCLLISATVLRPGLGWYTVNSAYGDTIIMPCRVDVPQNLMFGKWKYEKPDGSPVFIAFRSSTKKSVQYDDVPEYKDRLNLSENYTLSISNAKISDEKRFVCMLVTEDDVFEAPTVVKVFKQPSKPEIVSKAPFLETDKLKKLGECISKDSYPDGNITWYRNGKVLQALEGAVVIIFRKQMDSVTQLYTMTSSLEYKTTKADIQMPFTCSVTYYGPSGQKTVYSEQAVFDIYYPTEQVTIQVLPSKNAIKEGDNITLKCLGNGNPPPEEFLFYLPGQPEGIRSSNTYTLTDVKRNATGDYKCSLVDKKSMIASAAITVHYLDLSLNPSGEVTKQIGDALPVSCTISASRNATVVWMKDNVKLRSSPSFSSLHYQDAGNYVCETALQEVEGLKKRESLTLIVEGKPQIKMTKKTDPSGLSKTIICHVEGFPKPAIQWTITGSGSVINQTEESPYINGRYYSKIIISPEENVTLTCTAENQLERTVNSLNVSAISIPEHDEADEISDENKEKVNDQAKLIVGIVVGLLLAALVAGVVYWLYMKKSKTASKHVNKDLGNMEENKKLEENNHKTEA.

The signal sequence occupies residues 1-27 (MASKAAPSCRLVFCLLISATVLRPGLG). 2 Ig-like V-type domains span residues 28–120 (WYTV…TEDD) and 125–234 (PTVV…KTVY). Topologically, residues 28 to 527 (WYTVNSAYGD…NKEKVNDQAK (500 aa)) are extracellular. Intrachain disulfides connect Cys43–Cys113 and Cys157–Cys220. 9 N-linked (GlcNAc...) asparagine glycosylation sites follow: Asn91, Asn95, Asn167, Asn265, Asn306, Asn361, Asn457, Asn480, and Asn499. Ig-like C2-type domains are found at residues 245 to 328 (PTEQ…AAIT), 333 to 409 (DLSL…ESLT), and 416 to 501 (PQIK…LNVS). 3 disulfides stabilise this stretch: Cys270–Cys313, Cys354–Cys392, and Cys435–Cys485. The helical transmembrane segment at 528 to 549 (LIVGIVVGLLLAALVAGVVYWL) threads the bilayer. At 550-583 (YMKKSKTASKHVNKDLGNMEENKKLEENNHKTEA) the chain is on the cytoplasmic side. The tract at residues 562 to 583 (NKDLGNMEENKKLEENNHKTEA) is disordered. A compositionally biased stretch (basic and acidic residues) spans 569 to 583 (EENKKLEENNHKTEA).

In terms of assembly, homodimer. Interacts (via extracellular domain) with CD6 (via extracellular domain). Homodimerization and interaction with CD6 involve the same region and cannot occur simultaneously. The affinity for CD6 is much higher than the affinity for self-association. Interacts (via glycosylated extracellular domain) with LGALS1 and LGALS3. Interaction with LGALS1 or LGALS3 inhibits interaction with CD6. In terms of processing, glycosylated. As to expression, constitutively expressed in the autonomic nervous system. Sympathetic and parasympathetic nerve fibers but not myelinated nerve fibers in the spinal nerve.

It is found in the cell membrane. The protein resides in the cell projection. It localises to the axon. The protein localises to the dendrite. Functionally, cell adhesion molecule that mediates both heterotypic cell-cell contacts via its interaction with CD6, as well as homotypic cell-cell contacts. Promotes T-cell activation and proliferation via its interactions with CD6. Contributes to the formation and maturation of the immunological synapse via its interactions with CD6. Mediates homotypic interactions with cells that express ALCAM. Mediates attachment of dendritic cells onto endothelial cells via homotypic interaction. Inhibits endothelial cell migration and promotes endothelial tube formation via homotypic interactions. Required for normal organization of the lymph vessel network. Required for normal hematopoietic stem cell engraftment in the bone marrow. Plays a role in hematopoiesis; required for normal numbers of hematopoietic stem cells in bone marrow. Promotes in vitro osteoblast proliferation and differentiation. Promotes neurite extension, axon growth and axon guidance; axons grow preferentially on surfaces that contain ALCAM. Mediates outgrowth and pathfinding for retinal ganglion cell axons. The sequence is that of CD166 antigen (ALCAM) from Bos taurus (Bovine).